Here is a 642-residue protein sequence, read N- to C-terminus: Probable serine/threonine-protein kinase drkA (642 aa).

The signal sequence occupies residues 1-23 (MKKLPFLIIIIYIFLILISISSS). Residues 24-322 (IDYNYNNDID…KPTISLLKKY (299 aa)) are Extracellular-facing. The span at 106–128 (SENSGSGSNSNSNSKNTDSSTGP) shows a compositional bias: low complexity. The interval 106–136 (SENSGSGSNSNSNSKNTDSSTGPTPSPISIN) is disordered. Residues N136, N140, N158, N244, and N271 are each glycosylated (N-linked (GlcNAc...) asparagine). Residues 323 to 343 (LIIGFSIVGGLLIIGGCFLLI) traverse the membrane as a helical segment. The Cytoplasmic portion of the chain corresponds to 344–642 (RNRYRSSGYY…SDLQYVRQQL (299 aa)). Positions 374–627 (IKIGVRIGKG…EQCLERLESI (254 aa)) constitute a Protein kinase domain. ATP-binding positions include 380-388 (IGKGNYGEV) and K401. D497 (proton acceptor) is an active-site residue.

It belongs to the protein kinase superfamily. TKL Ser/Thr protein kinase family.

It localises to the membrane. It catalyses the reaction L-seryl-[protein] + ATP = O-phospho-L-seryl-[protein] + ADP + H(+). The enzyme catalyses L-threonyl-[protein] + ATP = O-phospho-L-threonyl-[protein] + ADP + H(+). The sequence is that of Probable serine/threonine-protein kinase drkA (drkA) from Dictyostelium discoideum (Social amoeba).